We begin with the raw amino-acid sequence, 551 residues long: mRNA cap guanine-N(7) methyltransferase (551 aa).

Residues 1-10 (MENRSSSGTP) are compositionally biased toward polar residues. A disordered region spans residues 1 to 152 (MENRSSSGTP…DRETLRRRQE (152 aa)). Composition is skewed to basic and acidic residues over residues 48 to 76 (VTEE…EERH) and 141 to 152 (LVDRETLRRRQE). Positions 194 to 551 (SKIKGLRSFN…FYHAFCFYKV (358 aa)) constitute an mRNA cap 0 methyltransferase domain. An mRNA-binding site is contributed by 203–204 (NN). Residues lysine 207, glycine 250, aspartate 274, aspartate 312, 355-357 (MFA), and tyrosine 360 each bind S-adenosyl-L-methionine. A disordered region spans residues 407–430 (KAREEQEKKEKSDEAPEDGEVEED). Residues 408–420 (AREEQEKKEKSDE) are compositionally biased toward basic and acidic residues. The span at 421-430 (APEDGEVEED) shows a compositional bias: acidic residues.

The protein belongs to the class I-like SAM-binding methyltransferase superfamily. mRNA cap 0 methyltransferase family.

The protein resides in the nucleus. It catalyses the reaction a 5'-end (5'-triphosphoguanosine)-ribonucleoside in mRNA + S-adenosyl-L-methionine = a 5'-end (N(7)-methyl 5'-triphosphoguanosine)-ribonucleoside in mRNA + S-adenosyl-L-homocysteine. Functionally, responsible for methylating the 5'-cap structure of mRNAs. This is mRNA cap guanine-N(7) methyltransferase (abd1) from Aspergillus clavatus (strain ATCC 1007 / CBS 513.65 / DSM 816 / NCTC 3887 / NRRL 1 / QM 1276 / 107).